A 69-amino-acid polypeptide reads, in one-letter code: Antimicrobial peptide ISAMP (69 aa).

Residues M1–E23 form the signal peptide.

Expressed in the fat body, hemocytes and salivary glands of partially-fed female ticks. Not expressed in the midgut.

It localises to the secreted. In terms of biological role, has antimicrobial activity against B.cereus (MIC=5.8 ug/ml), B.subtilis (MIC=12.3 ug/ml), S.aureus (MIC=10.4 ug/ml), E.coli Edl 933 (MIC=3.2 ug/ml) and E.coli MG/655 (MIC=4.2 ug/ml). Non-hemolytic. This chain is Antimicrobial peptide ISAMP, found in Ixodes scapularis (Black-legged tick).